The sequence spans 305 residues: Endonuclease III-like protein 1 (305 aa).

Residues 1–28 (MNAAGVRMVVTRARSRGTGASLRRRGEK) constitute a mitochondrion transit peptide. A disordered region spans residues 1-83 (MNAAGVRMVV…HLQAPSWQPQ (83 aa)). Ser-64 carries the phosphoserine modification. The HhH domain maps to 192–216 (RYDGDIPASVAELVALPGVGPKMAH). Lys-213 acts as the Nucleophile; for N-glycosylase activity in catalysis. Cys-283, Cys-290, Cys-293, and Cys-299 together coordinate [4Fe-4S] cluster.

This sequence belongs to the Nth/MutY family. As to quaternary structure, interacts with YBX1. Interacts with ERCC5/XPG; the interaction stimulates NTHL1 activity and NTHL1 binding to its DNA substrate. It depends on [4Fe-4S] cluster as a cofactor.

Its subcellular location is the nucleus. The protein resides in the mitochondrion. The catalysed reaction is 2'-deoxyribonucleotide-(2'-deoxyribose 5'-phosphate)-2'-deoxyribonucleotide-DNA = a 3'-end 2'-deoxyribonucleotide-(2,3-dehydro-2,3-deoxyribose 5'-phosphate)-DNA + a 5'-end 5'-phospho-2'-deoxyribonucleoside-DNA + H(+). In terms of biological role, bifunctional DNA N-glycosylase with associated apurinic/apyrimidinic (AP) lyase function that catalyzes the first step in base excision repair (BER), the primary repair pathway for the repair of oxidative DNA damage. The DNA N-glycosylase activity releases the damaged DNA base from DNA by cleaving the N-glycosidic bond, leaving an AP site. The AP lyase activity cleaves the phosphodiester bond 3' to the AP site by a beta-elimination. Primarily recognizes and repairs oxidative base damage of pyrimidines. This chain is Endonuclease III-like protein 1, found in Bos taurus (Bovine).